Reading from the N-terminus, the 377-residue chain is Caspase-4 (377 aa).

A required for LPS-binding region spans residues 1–59 (MAEDKHNKNPLKMLESLGKELISGLLDDFVEKNVLKLEEEEKKKIYDAKLQDKARVLVD). The propeptide occupies 1 to 80 (MAEDKHNKNP…VFVQTFLNID (80 aa)). One can recognise a CARD domain in the interval 1-91 (MAEDKHNKNP…NSTSIKAPEE (91 aa)). Position 83 is a phosphoserine (Ser-83). Residues His-210 and Cys-258 contribute to the active site. Positions 271–289 (SPPALADSFSQSSENLEED) are excised as a propeptide.

It belongs to the peptidase C14A family. In terms of assembly, heterotetramer that consists of two anti-parallel arranged heterodimers, each one formed by a 20 kDa (Caspase-4 subunit p20) and a 10 kDa (Caspase-4 subunit p10) subunit. Upon direct LPS-binding, forms large homooligomers, resulting in its activation. These oligomers are often referred to as 'non-canonical inflammasomes'. In its precursor form, interacts with TMEM214; this interaction is required for association with the endoplasmic reticulum membrane. Interacts with CASP1. Interacts with NOD2. Interacts with Serpinb1a, Serpinb1b and Serpinb1c; these interactions regulate CASP4 activity. Heterotetramer that consists of two anti-parallel arranged heterodimers, each one formed by a 20 kDa (Caspase-4 subunit p20) and a 10 kDa (Caspase-4 subunit p10) subunit. In response to activation signals, undergoes autoproteolytic cleavage and activation.

The protein resides in the cytoplasm. It is found in the cytosol. Its subcellular location is the endoplasmic reticulum membrane. It localises to the mitochondrion. The protein localises to the inflammasome. The protein resides in the secreted. It catalyses the reaction Strict requirement for Asp at the P1 position. It has a preferred cleavage sequence of Tyr-Val-Ala-Asp-|- but also cleaves at Asp-Glu-Val-Asp-|-.. Activated by homooligomerization induced by direct binding to cytosolic LPS, in a TLR4-independent manner. In addition to LPS, CASP4/CASP11 may also be activated by oxidized phospholipid 1-palmitoyl-2-arachidonoyl- sn-glycero-3-phosphorylcholine, an oxidized phospholipid (oxPAPC), in dendritic cells, promoting adaptive immunity. The role of oxPAPC is however unclear and another report suggests that oxPAPC competes with LPS-binding and inhibits the non-canonical inflammasome in macrophages. Its function is as follows. Inflammatory caspase that acts as the effector of the non-canonical inflammasome by mediating lipopolysaccharide (LPS)-induced pyroptosis. Also indirectly activates the NLRP3 and NLRP6 inflammasomes. Acts as a thiol protease that cleaves a tetrapeptide after an Asp residue at position P1: catalyzes cleavage of CGAS, GSDMD and IL18. Effector of the non-canonical inflammasome independently of NLRP3 inflammasome and CASP1: the non-canonical inflammasome promotes pyroptosis through GSDMD cleavage without involving secretion of cytokine IL1B. In the non-canonical inflammasome, CASP4 is activated by direct binding to the lipid A moiety of LPS without the need of an upstream sensor. LPS-binding promotes CASP4 activation and CASP4-mediated cleavage of GSDMD and IL18, followed by IL18 secretion through the GSDMD pore, pyroptosis of infected cells and their extrusion into the gut lumen. Also indirectly promotes secretion of mature cytokines (IL1A and HMGB1) downstream of GSDMD-mediated pyroptosis via activation of the NLRP3 and NLRP6 inflammasomes. Involved in NLRP3-dependent CASP1 activation and IL1B secretion in response to non-canonical activators, such as UVB radiation or cholera enterotoxin. Involved in NLRP6 inflammasome-dependent activation in response to lipoteichoic acid (LTA), a cell-wall component of Gram-positive bacteria, which leads to CASP1 activation and IL1B secretion. Involved in LPS-induced IL6 secretion; this activity may not require caspase enzymatic activity. The non-canonical inflammasome is required for innate immunity to cytosolic, but not vacuolar, bacteria. Plays a crucial role in the restriction of S.typhimurium replication in colonic epithelial cells during infection. Pyroptosis limits bacterial replication, while cytokine secretion promotes the recruitment and activation of immune cells and triggers mucosal inflammation. May also act as an activator of adaptive immunity in dendritic cells, following activation by oxidized phospholipid 1-palmitoyl-2-arachidonoyl- sn-glycero-3-phosphorylcholine, an oxidized phospholipid (oxPAPC). Cleavage of GSDMD is not strictly dependent on the consensus cleavage site but depends on an exosite interface on CASP4 that recognizes and binds the Gasdermin-D, C-terminal (GSDMD-CT) part. Catalyzes cleavage and maturation of IL18; IL18 processing also depends of the exosite interface on CASP4. In contrast, it does not directly process IL1B. During non-canonical inflammasome activation, cuts CGAS and may play a role in the regulation of antiviral innate immune activation. The chain is Caspase-4 (CASP4) from Bos taurus (Bovine).